Here is a 154-residue protein sequence, read N- to C-terminus: Egg-lysin (154 aa).

The signal sequence occupies residues 1-18; sequence MKLLVLCIFAMMATLAMS.

In terms of assembly, monomer. Homodimer. Molecules associate into dimers and then rapidly dissociate again. Interacts (as a monomer) with the egg vitelline layer protein VERL (via VERL repeats); each VERL chain can bind multiple copies of lysin. In terms of tissue distribution, sperm (at protein level).

It localises to the cytoplasmic vesicle. The protein localises to the secretory vesicle. It is found in the acrosome lumen. Its function is as follows. Creates a 3 um hole in the egg vitelline layer through which the sperm passes. Does not have enzyme activity. Species-specific interaction between the sperm protein lysin and the egg protein VERL exposes a basic surface on lysin that may dissociate the egg vitelline layer via electrostatic repulsion. Plays a role in ensuring species-specific fertilization. The chain is Egg-lysin from Haliotis rufescens (California red abalone).